Here is a 238-residue protein sequence, read N- to C-terminus: Doublecortin domain-containing protein (238 aa).

The partial p25alpha domain stretch occupies residues 82-112; sequence VFERLNDKQFYTGVQKTKFMELLKNNKNKSS. The Doublecortin domain maps to 151 to 232; that stretch reads KTIFLFNNEK…GDPPAPIRNL (82 aa).

Interacts with alpha-tubulin 1 and beta-tubulin; the interaction stabilizes microtubule assembly.

The protein resides in the cytoplasm. It is found in the cytoskeleton. Involved in the stabilization of microtubules. Probably by controlling microtubules stabilization, plays a role in invasion, microneme secretion and parasite growth in host erythrocytes. The polypeptide is Doublecortin domain-containing protein (Plasmodium falciparum (isolate 3D7)).